The primary structure comprises 114 residues: T cell receptor beta variable 10-2 (114 aa).

An N-terminal signal peptide occupies residues 1 to 21 (MGTRLFFYVALCLLWAGHRDA). The Ig-like domain maps to 22 to 114 (GITQSPRYKI…TSVYFCASSE (93 aa)). A disulfide bridge connects residues Cys42 and Cys110.

Alpha-beta TR is a heterodimer composed of an alpha and beta chain; disulfide-linked. The alpha-beta TR is associated with the transmembrane signaling CD3 coreceptor proteins to form the TR-CD3 (TcR or TCR). The assembly of alpha-beta TR heterodimers with CD3 occurs in the endoplasmic reticulum where a single alpha-beta TR heterodimer associates with one CD3D-CD3E heterodimer, one CD3G-CD3E heterodimer and one CD247 homodimer forming a stable octameric structure. CD3D-CD3E and CD3G-CD3E heterodimers preferentially associate with TR alpha and TR beta chains, respectively. The association of the CD247 homodimer is the last step of TcR assembly in the endoplasmic reticulum and is required for transport to the cell surface.

It is found in the cell membrane. V region of the variable domain of T cell receptor (TR) beta chain that participates in the antigen recognition. Alpha-beta T cell receptors are antigen specific receptors which are essential to the immune response and are present on the cell surface of T lymphocytes. Recognize peptide-major histocompatibility (MH) (pMH) complexes that are displayed by antigen presenting cells (APC), a prerequisite for efficient T cell adaptive immunity against pathogens. Binding of alpha-beta TR to pMH complex initiates TR-CD3 clustering on the cell surface and intracellular activation of LCK that phosphorylates the ITAM motifs of CD3G, CD3D, CD3E and CD247 enabling the recruitment of ZAP70. In turn ZAP70 phosphorylates LAT, which recruits numerous signaling molecules to form the LAT signalosome. The LAT signalosome propagates signal branching to three major signaling pathways, the calcium, the mitogen-activated protein kinase (MAPK) kinase and the nuclear factor NF-kappa-B (NF-kB) pathways, leading to the mobilization of transcription factors that are critical for gene expression and essential for T cell growth and differentiation. The T cell repertoire is generated in the thymus, by V-(D)-J rearrangement. This repertoire is then shaped by intrathymic selection events to generate a peripheral T cell pool of self-MH restricted, non-autoaggressive T cells. Post-thymic interaction of alpha-beta TR with the pMH complexes shapes TR structural and functional avidity. This chain is T cell receptor beta variable 10-2, found in Homo sapiens (Human).